A 368-amino-acid chain; its full sequence is Protein 5 (368 aa).

This Lettuce big-vein associated virus (isolate Japan/Kagawa) (LBVaV) protein is Protein 5.